Here is a 400-residue protein sequence, read N- to C-terminus: Mu-type opioid receptor (400 aa).

The Extracellular portion of the chain corresponds to 1-68 (MDSSAAPTNA…CPPTGSPSMI (68 aa)). N-linked (GlcNAc...) asparagine glycosylation is found at N9, N12, N33, N40, and N48. Residues 69–93 (TAITIMALYSIVCVVGLFGNFLVMY) traverse the membrane as a helical segment. Residues 94–106 (VIVRYTKMKTATN) lie on the Cytoplasmic side of the membrane. The helical transmembrane segment at 107 to 131 (IYIFNLALADALATSTLPFQSVNYL) threads the bilayer. At 132–142 (MGTWPFGTILC) the chain is on the extracellular side. A disulfide bridge connects residues C142 and C219. The chain crosses the membrane as a helical span at residues 143–165 (KIVISIDYYNMFTSIFTLCTMSV). At 166 to 185 (DRYIAVCHPVKALDFRTPRN) the chain is on the cytoplasmic side. Y168 is subject to Phosphotyrosine. A helical membrane pass occupies residues 186 to 207 (AKIINVCNWILSSAIGLPVMFM). The Extracellular portion of the chain corresponds to 208 to 230 (ATTKYRQGSIDCTLTFSHPTWYW). A helical membrane pass occupies residues 231–255 (ENLLKICVFIFAFIMPVLIITVCYG). At 256–279 (LMILRLKSVRMLSGSKEKDRNLRR) the chain is on the cytoplasmic side. Residues 280–306 (ITRMVLVVVAVFIVCWTPIHIYVIIKA) form a helical membrane-spanning segment. Over 307–314 (LVTIPETT) the chain is Extracellular. Residues 315–338 (FQTVSWHFCIALGYTNSCLNPVLY) form a helical membrane-spanning segment. The NPxxY; plays a role in stabilizing the activated conformation of the receptor motif lies at 334-338 (NPVLY). Topologically, residues 339–400 (AFLDENFKRC…NLEAETAPLP (62 aa)) are cytoplasmic. C353 carries the S-palmitoyl cysteine lipid modification. At S365 the chain carries Phosphoserine. Phosphothreonine is present on T372. The residue at position 377 (S377) is a Phosphoserine. A Phosphothreonine modification is found at T396.

Belongs to the G-protein coupled receptor 1 family. Forms homooligomers and heterooligomers with other GPCRs, such as OPRD1, OPRK1, OPRL1, NPFFR2, ADRA2A, SSTR2, CNR1 and CCR5 (probably in dimeric forms). Interacts with heterotrimeric G proteins; interaction with a heterotrimeric complex containing GNAI1, GNB1 and GNG2 stabilizes the active conformation of the receptor and increases its affinity for endomorphin-2, the synthetic opioid peptide DAMGO and for morphinan agonists. Interacts with PPL; the interaction disrupts agonist-mediated G-protein activation. Interacts (via C-terminus) with DNAJB4 (via C-terminus). Interacts with calmodulin; the interaction inhibits the constitutive activity of OPRM1; it abolishes basal and attenuates agonist-stimulated G-protein coupling. Interacts with FLNA, PLD2, RANBP9 and WLS and GPM6A. Interacts with RTP4. Interacts with SYP and GNAS. Interacts with RGS9, RGS17, RGS20, RGS4, PPP1R9B and HINT1. In terms of processing, phosphorylated. Differentially phosphorylated in basal and agonist-induced conditions. Agonist-mediated phosphorylation modulates receptor internalization. Phosphorylated by GRK2 in a agonist-dependent manner. Phosphorylation at Tyr-168 requires receptor activation, is dependent on non-receptor protein tyrosine kinase Src and results in a decrease in agonist efficacy by reducing G-protein coupling efficiency. Phosphorylated on tyrosine residues; the phosphorylation is involved in agonist-induced G-protein-independent receptor down-regulation. Phosphorylation at Ser-377 is involved in G-protein-dependent but not beta-arrestin-dependent activation of the ERK pathway. Ubiquitinated. A basal ubiquitination seems not to be related to degradation. Ubiquitination is increased upon formation of OPRM1:OPRD1 oligomers leading to proteasomal degradation; the ubiquitination is diminished by RTP4. As to expression, expressed in brain. Isoform 16 and isoform 17 are detected in brain.

The protein localises to the cell membrane. The protein resides in the cell projection. It localises to the axon. It is found in the perikaryon. Its subcellular location is the dendrite. The protein localises to the endosome. The protein resides in the cytoplasm. In terms of biological role, receptor for endogenous opioids such as beta-endorphin and endomorphin. Receptor for natural and synthetic opioids including morphine, heroin, DAMGO, fentanyl, etorphine, buprenorphin and methadone. Also activated by enkephalin peptides, such as Met-enkephalin or Met-enkephalin-Arg-Phe, with higher affinity for Met-enkephalin-Arg-Phe. Agonist binding to the receptor induces coupling to an inactive GDP-bound heterotrimeric G-protein complex and subsequent exchange of GDP for GTP in the G-protein alpha subunit leading to dissociation of the G-protein complex with the free GTP-bound G-protein alpha and the G-protein beta-gamma dimer activating downstream cellular effectors. The agonist- and cell type-specific activity is predominantly coupled to pertussis toxin-sensitive G(i) and G(o) G alpha proteins, GNAI1, GNAI2, GNAI3 and GNAO1 isoforms Alpha-1 and Alpha-2, and to a lesser extent to pertussis toxin-insensitive G alpha proteins GNAZ and GNA15. They mediate an array of downstream cellular responses, including inhibition of adenylate cyclase activity and both N-type and L-type calcium channels, activation of inward rectifying potassium channels, mitogen-activated protein kinase (MAPK), phospholipase C (PLC), phosphoinositide/protein kinase (PKC), phosphoinositide 3-kinase (PI3K) and regulation of NF-kappa-B. Also couples to adenylate cyclase stimulatory G alpha proteins. The selective temporal coupling to G-proteins and subsequent signaling can be regulated by RGSZ proteins, such as RGS9, RGS17 and RGS4. Phosphorylation by members of the GPRK subfamily of Ser/Thr protein kinases and association with beta-arrestins is involved in short-term receptor desensitization. Beta-arrestins associate with the GPRK-phosphorylated receptor and uncouple it from the G-protein thus terminating signal transduction. The phosphorylated receptor is internalized through endocytosis via clathrin-coated pits which involves beta-arrestins. The activation of the ERK pathway occurs either in a G-protein-dependent or a beta-arrestin-dependent manner and is regulated by agonist-specific receptor phosphorylation. Acts as a class A G-protein coupled receptor (GPCR) which dissociates from beta-arrestin at or near the plasma membrane and undergoes rapid recycling. Receptor down-regulation pathways are varying with the agonist and occur dependent or independent of G-protein coupling. Endogenous ligands induce rapid desensitization, endocytosis and recycling. Heterooligomerization with other GPCRs can modulate agonist binding, signaling and trafficking properties. Its function is as follows. Couples to GNAS and is proposed to be involved in excitatory effects. Functionally, does not bind agonists but may act through oligomerization with binding-competent OPRM1 isoforms and reduce their ligand binding activity. This is Mu-type opioid receptor (OPRM1) from Homo sapiens (Human).